The chain runs to 72 residues: ATP synthase subunit c (72 aa).

The next 2 helical transmembrane spans lie at 1-21 and 49-69; these read MSLG…GAGI and FIGV…AFIV.

Belongs to the ATPase C chain family. In terms of assembly, F-type ATPases have 2 components, F(1) - the catalytic core - and F(0) - the membrane proton channel. F(1) has five subunits: alpha(3), beta(3), gamma(1), delta(1), epsilon(1). F(0) has three main subunits: a(1), b(2) and c(10-14). The alpha and beta chains form an alternating ring which encloses part of the gamma chain. F(1) is attached to F(0) by a central stalk formed by the gamma and epsilon chains, while a peripheral stalk is formed by the delta and b chains.

The protein resides in the cell membrane. F(1)F(0) ATP synthase produces ATP from ADP in the presence of a proton or sodium gradient. F-type ATPases consist of two structural domains, F(1) containing the extramembraneous catalytic core and F(0) containing the membrane proton channel, linked together by a central stalk and a peripheral stalk. During catalysis, ATP synthesis in the catalytic domain of F(1) is coupled via a rotary mechanism of the central stalk subunits to proton translocation. In terms of biological role, key component of the F(0) channel; it plays a direct role in translocation across the membrane. A homomeric c-ring of between 10-14 subunits forms the central stalk rotor element with the F(1) delta and epsilon subunits. This chain is ATP synthase subunit c, found in Bacillus cytotoxicus (strain DSM 22905 / CIP 110041 / 391-98 / NVH 391-98).